Here is a 380-residue protein sequence, read N- to C-terminus: tRNA-specific 2-thiouridylase MnmA (380 aa).

ATP-binding positions include 26–33 (AMSGGVDS) and Leu-52. The active-site Nucleophile is the Cys-120. Residues Cys-120 and Cys-217 are joined by a disulfide bond. Gly-144 contributes to the ATP binding site. Residues 166-168 (RDQ) are interaction with tRNA. The Cysteine persulfide intermediate role is filled by Cys-217.

It belongs to the MnmA/TRMU family.

The protein resides in the cytoplasm. It catalyses the reaction S-sulfanyl-L-cysteinyl-[protein] + uridine(34) in tRNA + AH2 + ATP = 2-thiouridine(34) in tRNA + L-cysteinyl-[protein] + A + AMP + diphosphate + H(+). Catalyzes the 2-thiolation of uridine at the wobble position (U34) of tRNA, leading to the formation of s(2)U34. This is tRNA-specific 2-thiouridylase MnmA from Jannaschia sp. (strain CCS1).